The sequence spans 442 residues: Glutamate--tRNA ligase 1 (442 aa).

Positions 9 to 19 match the 'HIGH' region motif; it reads PSPTGKLHVGN. Residues 240–244 carry the 'KMSKS' region motif; the sequence is KLSKR. An ATP-binding site is contributed by Lys243.

Belongs to the class-I aminoacyl-tRNA synthetase family. Glutamate--tRNA ligase type 1 subfamily. In terms of assembly, monomer.

It is found in the cytoplasm. It carries out the reaction tRNA(Glu) + L-glutamate + ATP = L-glutamyl-tRNA(Glu) + AMP + diphosphate. Functionally, catalyzes the attachment of glutamate to tRNA(Glu) in a two-step reaction: glutamate is first activated by ATP to form Glu-AMP and then transferred to the acceptor end of tRNA(Glu). This chain is Glutamate--tRNA ligase 1, found in Novosphingobium aromaticivorans (strain ATCC 700278 / DSM 12444 / CCUG 56034 / CIP 105152 / NBRC 16084 / F199).